The sequence spans 1848 residues: Cellulose-binding protein A (1848 aa).

The N-terminal stretch at 1–28 is a signal peptide; that stretch reads MQKKKSLNLLLALMMVFALVLPSIPALA. A CBM3 domain is found at 29 to 190; it reads ATSSMSVEFY…GAKVLGTAPG (162 aa). Cohesin domains follow at residues 291–428, 435–570, 668–801, 810–943, 952–1085, 1094–1227, 1236–1369, 1377–1511, and 1709–1847; these read VTAT…TVTI, MQIS…SVTI, VTAT…SVTI, VKAT…RLTI, and FAVK…SVKV.

The N-terminus is blocked. In terms of processing, glycosylated.

Its subcellular location is the secreted. Functionally, binds to cellulose fibers and coordinates cellulase enzymes. This Clostridium cellulovorans protein is Cellulose-binding protein A (cbpA).